The following is a 286-amino-acid chain: uncharacterized protein (286 aa).

2 helical membrane-spanning segments follow: residues 201–221 and 231–251; these read VIYS…LCET and AIIL…YLMM.

The protein resides in the cell membrane. This is an uncharacterized protein from Methanocaldococcus jannaschii (strain ATCC 43067 / DSM 2661 / JAL-1 / JCM 10045 / NBRC 100440) (Methanococcus jannaschii).